The sequence spans 1017 residues: MASPSSFSSQNYKFNVFASFHGPDVRKTLLSHIRLQFNRNGITMFDDQKIVRSATIGPSLVEAIKESRISIVILSKKYASSSWCLDELVEILECKKAMGQIVMTIFYGVDPSDVRKQIGKFGIAFNETCARKTEEERQKWSKALNQVSNIAGEDFLRWDNEAIMIEKIARDVLDKLNATPSRDFDGMVGIEAHLREIKSLLDLDNVEVKIVAIAGPAGIGKTTIARALYGLLSKRFQLSCFVDNLRGSYHSGFDEYGFKLHLQEQFLSKVLNQSGMRICHLGAIKENLSDQRVLIILDDVNKLKQLEALANETTWFGPGSRIVVTTENKELLQQHGINNTYHVGFPSDEDALKILCSYAFKQTSPRHGFEELSESVTKLCGKLPLGLCVVGSSLRGKKEDEWEDVVTRLETILDQDIEDVLRVGYESLDENAQTLFLHIAIFFNKEDGDLVKTMFAESDLDVKYGLKILENRSLIKMKIFSNGDTKIVMHRLLQQMGKRAIQKQEPWERQILIDAREICHVLEHAKGTGWNVHGMSFDISRISEVSIRKKAFKRMPNLQFLKVYKSKDDGNNRMHVPEEMDFPCLLRLLDWKAYPSKSLPPTFNPEHLVELNMHSSQLEYLWQGTQPLKNLKKMDLSQSKNLKQLPDLSNATNLEYLYLMGCESLIEIPSSISHLHKLEMLATVGCINLEVIPAHMNLESLQTVYLGGCSRLRNIPVMSTNIRYLFITNTAVEGVPLCPGLKTLDVSGSRNFKGLLTHLPTSLTTLNLCYTDIERIPDCFKSLHQLKGVNLRGCRRLASLPELPRSLLTLVADDCESLETVFCPLNTLKASFSFANCFKLDREARRAIIQQSFFMGKAVLPGREVPAVFDHRAKGYSLTIRPDGNPYTSFVFCVVVSRNQKSDKTIPPSLLWRRIIAQDEGYPVEVWNRIGDVFKYRTEHLLIFHFDFLEFDNRDIVFEFSSESHDFDIIECGAKVLAEKSIKESYESGSDQAFEDDVVFEPSKAFGDEKYGDCCIL.

One can recognise a TIR domain in the interval 12–176 (YKFNVFASFH…KIARDVLDKL (165 aa)). The active site involves Glu87. The 257-residue stretch at 191-447 (EAHLREIKSL…HIAIFFNKED (257 aa)) folds into the NB-ARC domain. LRR repeat units follow at residues 539-562 (ISRI…QFLK), 583-605 (PCLL…TFNP), 606-628 (EHLV…TQPL), 629-652 (KNLK…SNAT), 654-675 (LEYL…ISHL), 676-698 (HKLE…HMNL), 699-724 (ESLQ…NIRY), 738-760 (CPGL…THLP), 761-782 (TSLT…CFKS), and 784-809 (HQLK…SLLT).

The catalysed reaction is NAD(+) + H2O = ADP-D-ribose + nicotinamide + H(+). Functionally, TIR-NB-LRR receptor-like protein that confers resistance to the pathogen Leptosphaeria maculans (blackleg disease). The polypeptide is Disease resistance protein RML1B (Arabidopsis thaliana (Mouse-ear cress)).